Here is a 722-residue protein sequence, read N- to C-terminus: Polyribonucleotide nucleotidyltransferase (722 aa).

Positions 498 and 504 each coordinate Mg(2+). The KH domain maps to 565–624; that stretch reads PQFHTMKIDPDKIRDIIGKGGATIRSITEETGASIDIDDNGTIKIYADDGDGMQAAIARI. An S1 motif domain is found at 634–702; that stretch reads GAVYQGKVVR…QRGRIKLSIK (69 aa).

This sequence belongs to the polyribonucleotide nucleotidyltransferase family. As to quaternary structure, component of the RNA degradosome, which is a multiprotein complex involved in RNA processing and mRNA degradation. The cofactor is Mg(2+).

The protein resides in the cytoplasm. The catalysed reaction is RNA(n+1) + phosphate = RNA(n) + a ribonucleoside 5'-diphosphate. Functionally, involved in mRNA degradation. Catalyzes the phosphorolysis of single-stranded polyribonucleotides processively in the 3'- to 5'-direction. The protein is Polyribonucleotide nucleotidyltransferase of Saccharophagus degradans (strain 2-40 / ATCC 43961 / DSM 17024).